The primary structure comprises 362 residues: 3-isopropylmalate dehydrogenase (362 aa).

78 to 91 (GPKWETLPPDEQPE) serves as a coordination point for NAD(+). Arg99, Arg109, Arg138, and Asp227 together coordinate substrate. Asp227, Asp251, and Asp255 together coordinate Mg(2+). 285 to 297 (GSAPDIAGQGIAN) lines the NAD(+) pocket.

It belongs to the isocitrate and isopropylmalate dehydrogenases family. LeuB type 1 subfamily. Homodimer. The cofactor is Mg(2+). Requires Mn(2+) as cofactor.

The protein resides in the cytoplasm. The enzyme catalyses (2R,3S)-3-isopropylmalate + NAD(+) = 4-methyl-2-oxopentanoate + CO2 + NADH. It functions in the pathway amino-acid biosynthesis; L-leucine biosynthesis; L-leucine from 3-methyl-2-oxobutanoate: step 3/4. Catalyzes the oxidation of 3-carboxy-2-hydroxy-4-methylpentanoate (3-isopropylmalate) to 3-carboxy-4-methyl-2-oxopentanoate. The product decarboxylates to 4-methyl-2 oxopentanoate. This is 3-isopropylmalate dehydrogenase from Geobacter metallireducens (strain ATCC 53774 / DSM 7210 / GS-15).